Here is a 248-residue protein sequence, read N- to C-terminus: Probable transcriptional regulatory protein Dde_2325 (248 aa).

Positions 1–15 are enriched in basic residues; it reads MAGHSKWKNIQHRKG. A disordered region spans residues 1–22; sequence MAGHSKWKNIQHRKGRQDAKKS.

This sequence belongs to the TACO1 family.

The protein resides in the cytoplasm. This is Probable transcriptional regulatory protein Dde_2325 from Oleidesulfovibrio alaskensis (strain ATCC BAA-1058 / DSM 17464 / G20) (Desulfovibrio alaskensis).